We begin with the raw amino-acid sequence, 656 residues long: Macrolide export ATP-binding/permease protein MacB (656 aa).

Positions 20–258 (IELAGITRSF…EPDFAPHVDR (239 aa)) constitute an ABC transporter domain. 56–63 (GASGSGKS) serves as a coordination point for ATP. Transmembrane regions (helical) follow at residues 284 to 304 (ALTL…LAIG), 531 to 551 (LTIL…IGVM), 591 to 611 (ALGG…IALF), and 619 to 639 (LLPV…FGYL).

This sequence belongs to the ABC transporter superfamily. Macrolide exporter (TC 3.A.1.122) family. Homodimer.

The protein localises to the cell inner membrane. Its function is as follows. Non-canonical ABC transporter that contains transmembrane domains (TMD), which form a pore in the inner membrane, and an ATP-binding domain (NBD), which is responsible for energy generation. Confers resistance against macrolides. This chain is Macrolide export ATP-binding/permease protein MacB, found in Azoarcus sp. (strain BH72).